Here is a 205-residue protein sequence, read N- to C-terminus: Protein MIS12 homolog (205 aa).

Residues 108–205 are a coiled coil; sequence PYSEEDFQHL…EKESKRLKIS (98 aa).

This sequence belongs to the mis12 family. Component of the MIS12 complex composed of MIS12, DSN1, NSL1 and PMF1. Also interacts with KNL1, CBX3, CBX5, NDC80 and ZWINT.

It localises to the chromosome. Its subcellular location is the centromere. The protein localises to the kinetochore. Its function is as follows. Part of the MIS12 complex which is required for normal chromosome alignment and segregation and for kinetochore formation during mitosis. Essential for proper kinetochore microtubule attachments. The protein is Protein MIS12 homolog of Homo sapiens (Human).